Reading from the N-terminus, the 287-residue chain is Nuclease S1 (287 aa).

Residues 1–20 form the signal peptide; the sequence is MPRLLPISAATLALAQLTYG. Residues tryptophan 21, histidine 26, aspartate 65, and histidine 80 each coordinate a divalent metal cation. Residues 21–26, 65–71, 80–83, and 93–98 each bind substrate; these read WGNLGH, DTYKYTD, HFID, and GVDYDR. Intrachain disulfides connect cysteine 92–cysteine 236 and cysteine 100–cysteine 105. N-linked (GlcNAc...) asparagine glycosylation is found at asparagine 112 and asparagine 122. Residues histidine 135, aspartate 139, histidine 145, histidine 168, and aspartate 172 each contribute to the a divalent metal cation site. The interval 135-183 is substrate binding; sequence HIIGDIHQPLHDENLEAGGNGIDVTYDGETTNLHHIWDTNMPEEAAGGY. Asparagine 248 is a glycosylation site (N-linked (GlcNAc...) asparagine).

This sequence belongs to the nuclease type I family. In terms of assembly, monomer. Requires Zn(2+) as cofactor.

The enzyme catalyses Endonucleolytic cleavage to 5'-phosphomononucleotide and 5'-phosphooligonucleotide end-products.. Inhibited by inorganic phosphate (Pi). In terms of biological role, hydrolyzes only single-stranded DNA and RNA without apparent specificity for bases. The polypeptide is Nuclease S1 (Aspergillus oryzae (strain ATCC 42149 / RIB 40) (Yellow koji mold)).